We begin with the raw amino-acid sequence, 337 residues long: Cysteinyl leukotriene receptor 1 (337 aa).

At 1 to 28 (MDETGNLTVSSATCHDTIDDFRNQVYST) the chain is on the extracellular side. Residue asparagine 6 is glycosylated (N-linked (GlcNAc...) asparagine). Residues 29–49 (LYSMISVVGFFGNGFVLYVLI) traverse the membrane as a helical segment. The Cytoplasmic portion of the chain corresponds to 50–57 (KTYHKKSA). The chain crosses the membrane as a helical span at residues 58-78 (FQVYMINLAVADLLCVCTLPL). Over 79 to 106 (RVVYYVHKGIWLFGDFLCRLSTYALYVN) the chain is Extracellular. A disulfide bridge connects residues cysteine 96 and cysteine 173. The chain crosses the membrane as a helical span at residues 107 to 127 (LYCSIFFMTAMSFFRCIAIVF). Residues 128-141 (PVQNINLVTQKKAR) are Cytoplasmic-facing. The helical transmembrane segment at 142 to 162 (FVCVGIWIFVILTSSPFLMAK) threads the bilayer. The Extracellular portion of the chain corresponds to 163 to 193 (PQKDEKNNTKCFEPPQDNQTKNHVLVLHYVS). Asparagine 169 and asparagine 180 each carry an N-linked (GlcNAc...) asparagine glycan. The helical transmembrane segment at 194 to 214 (LFVGFIIPFVIIIVCYTMIIL) threads the bilayer. At 215 to 230 (TLLKKSMKKNLSSHKK) the chain is on the cytoplasmic side. A helical transmembrane segment spans residues 231-251 (AIGMIMVVTAAFLVSFMPYHI). Over 252 to 276 (QRTIHLHFLHNETKPCDSVLRMQKS) the chain is Extracellular. N-linked (GlcNAc...) asparagine glycosylation occurs at asparagine 262. A helical transmembrane segment spans residues 277-297 (VVITLSLAASNCCFDPLLYFF). The Cytoplasmic segment spans residues 298–337 (SGGNFRKRLSTFRKHSLSSVTYVPRKKASLPEKGEEICKV).

Belongs to the G-protein coupled receptor 1 family. Widely expressed, with highest levels in spleen and peripheral blood leukocytes. Lower expression in several tissues, such as lung (mostly in smooth muscle bundles and alveolar macrophages), placenta, small intestine, pancreas, colon and heart.

It localises to the cell membrane. Receptor for cysteinyl leukotrienes mediating bronchoconstriction of individuals with and without asthma. Stimulation by LTD4 results in the contraction and proliferation of smooth muscle, edema, eosinophil migration and damage to the mucus layer in the lung. This response is mediated via a G-protein that activates a phosphatidylinositol-calcium second messenger system. The rank order of affinities for the leukotrienes is LTD4 &gt;&gt; LTE4 = LTC4 &gt;&gt; LTB4. In Homo sapiens (Human), this protein is Cysteinyl leukotriene receptor 1 (CYSLTR1).